Consider the following 103-residue polypeptide: Large ribosomal subunit protein bL21 (103 aa).

It belongs to the bacterial ribosomal protein bL21 family. Part of the 50S ribosomal subunit. Contacts protein L20.

This protein binds to 23S rRNA in the presence of protein L20. The sequence is that of Large ribosomal subunit protein bL21 from Mannheimia succiniciproducens (strain KCTC 0769BP / MBEL55E).